We begin with the raw amino-acid sequence, 745 residues long: Exocyst complex component 3 (745 aa).

Residue Lys28 is modified to N6-acetyllysine.

Belongs to the SEC6 family. As to quaternary structure, the exocyst complex is composed of EXOC1, EXOC2, EXOC3, EXOC4, EXOC5, EXOC6, EXOC7 and EXOC8. Interacts with EXOC3L1. Interacts with BIRC6/bruce. Interacts with MYRIP. Interacts with SLC6A9. Expressed in epididymis (at protein level).

It localises to the cytoplasm. It is found in the perinuclear region. The protein resides in the cell projection. Its subcellular location is the growth cone. The protein localises to the midbody. It localises to the golgi apparatus. It is found in the neuron projection. Functionally, component of the exocyst complex involved in the docking of exocytic vesicles with fusion sites on the plasma membrane. In Homo sapiens (Human), this protein is Exocyst complex component 3 (EXOC3).